The primary structure comprises 299 residues: GTPase Era (299 aa).

One can recognise an Era-type G domain in the interval 5–172 (KSGFVSIIGR…IDVLKSFLPE (168 aa)). The tract at residues 13–20 (GRPNVGKS) is G1. Position 13-20 (13-20 (GRPNVGKS)) interacts with GTP. A G2 region spans residues 39-43 (QTTRN). The interval 60–63 (DTPG) is G3. GTP is bound by residues 60–64 (DTPGI) and 122–125 (NKID). The segment at 122–125 (NKID) is G4. The G5 stretch occupies residues 151–153 (ISA). The KH type-2 domain occupies 203 to 280 (TSEEIPHAIG…YLELWVKVQR (78 aa)).

It belongs to the TRAFAC class TrmE-Era-EngA-EngB-Septin-like GTPase superfamily. Era GTPase family. Monomer.

It localises to the cytoplasm. Its subcellular location is the cell membrane. An essential GTPase that binds both GDP and GTP, with rapid nucleotide exchange. Plays a role in 16S rRNA processing and 30S ribosomal subunit biogenesis and possibly also in cell cycle regulation and energy metabolism. This chain is GTPase Era, found in Staphylococcus epidermidis (strain ATCC 35984 / DSM 28319 / BCRC 17069 / CCUG 31568 / BM 3577 / RP62A).